The primary structure comprises 86 residues: Serine protease inhibitor Kazal-type 4 (86 aa).

Residues methionine 1 to alanine 26 form the signal peptide. The region spanning phenylalanine 31–cysteine 86 is the Kazal-like domain. Cystine bridges form between cysteine 37/cysteine 68, cysteine 46/cysteine 65, and cysteine 54/cysteine 86.

As to expression, expressed in the intestinal tract.

Its subcellular location is the secreted. In Mus musculus (Mouse), this protein is Serine protease inhibitor Kazal-type 4 (Spink4).